Reading from the N-terminus, the 123-residue chain is Large ribosomal subunit protein bL17 (123 aa).

This sequence belongs to the bacterial ribosomal protein bL17 family. As to quaternary structure, part of the 50S ribosomal subunit. Contacts protein L32.

The polypeptide is Large ribosomal subunit protein bL17 (Staphylococcus haemolyticus (strain JCSC1435)).